We begin with the raw amino-acid sequence, 353 residues long: MREKWVRAFAGVFCAMLLIGCSKSDRPQMGNAGGAEGGDFVVGMVTDSGDIDDKSFNQQVWEGISRFAQENNAKCKYVTASTDAEYVPSLSAFADENMGLVVACGSFLVEAVIETSARFPKQKFLVIDAVVQDRDNVVSAVFGQNEGSFLVGVAAALKAKEAGKSAVGFIVGMELGMMPLFEAGFEAGVKAVDPDIQVVVEVANTFSDPQKGQALAAKLYDSGVNVIFQVAGGTGNGVIKEARDRRLNGQDVWVIGVDRDQYMDGVYDGSKSVVLTSMVKRADVAAERISKMAYDGSFPGGQSIMFGLEDKAVGIPEENPNLSSAVMEKIRSFEEKIVSKEIVVPVRSARMMN.

The first 20 residues, 1-20, serve as a signal peptide directing secretion; that stretch reads MREKWVRAFAGVFCAMLLIG. The N-palmitoyl cysteine moiety is linked to residue cysteine 21. Residue cysteine 21 is the site of S-diacylglycerol cysteine attachment. Position 47 (aspartate 47) interacts with guanosine. Aspartate 47 contributes to the inosine binding site. Adenosine is bound by residues 47-48 and phenylalanine 56; that span reads DS. Guanosine contacts are provided by asparagine 57, aspartate 128, phenylalanine 206, glycine 232, aspartate 258, and lysine 280. Residues asparagine 57 and aspartate 128 each contribute to the inosine site. Adenosine-binding residues include aspartate 128, phenylalanine 206, glycine 232, aspartate 258, and lysine 280. Residues glycine 232, aspartate 258, and lysine 280 each contribute to the inosine site.

The protein belongs to the BMP lipoprotein family. In terms of assembly, monomer.

It localises to the cell membrane. Binds purine nucleosides and may play a role in purine nucleoside uptake. May be part of an ABC-type nucleoside uptake system. Has highest affinity for guanosine, followed by inosine and adenosine. Has very low affinity for cytidine and does not bind thymidine. The chain is Membrane lipoprotein TmpC (tmpC) from Treponema pallidum (strain Nichols).